A 365-amino-acid chain; its full sequence is UDP-N-acetylglucosamine--N-acetylmuramyl-(pentapeptide) pyrophosphoryl-undecaprenol N-acetylglucosamine transferase (365 aa).

UDP-N-acetyl-alpha-D-glucosamine contacts are provided by residues 19–21, Asn131, Arg170, Ser201, Ile255, 274–279, and Gln300; these read TGG and ALTVTE.

It belongs to the glycosyltransferase 28 family. MurG subfamily.

It localises to the cell inner membrane. The catalysed reaction is di-trans,octa-cis-undecaprenyl diphospho-N-acetyl-alpha-D-muramoyl-L-alanyl-D-glutamyl-meso-2,6-diaminopimeloyl-D-alanyl-D-alanine + UDP-N-acetyl-alpha-D-glucosamine = di-trans,octa-cis-undecaprenyl diphospho-[N-acetyl-alpha-D-glucosaminyl-(1-&gt;4)]-N-acetyl-alpha-D-muramoyl-L-alanyl-D-glutamyl-meso-2,6-diaminopimeloyl-D-alanyl-D-alanine + UDP + H(+). It functions in the pathway cell wall biogenesis; peptidoglycan biosynthesis. In terms of biological role, cell wall formation. Catalyzes the transfer of a GlcNAc subunit on undecaprenyl-pyrophosphoryl-MurNAc-pentapeptide (lipid intermediate I) to form undecaprenyl-pyrophosphoryl-MurNAc-(pentapeptide)GlcNAc (lipid intermediate II). In Acinetobacter baumannii (strain ACICU), this protein is UDP-N-acetylglucosamine--N-acetylmuramyl-(pentapeptide) pyrophosphoryl-undecaprenol N-acetylglucosamine transferase.